A 393-amino-acid polypeptide reads, in one-letter code: Pyrimidine monooxygenase RutA (393 aa).

Residues 79-80 (IK), Asn-145, Glu-154, 170-171 (RY), and Ser-220 contribute to the FMN site.

This sequence belongs to the NtaA/SnaA/DszA monooxygenase family. RutA subfamily.

The catalysed reaction is uracil + FMNH2 + NADH + O2 = (Z)-3-ureidoacrylate + FMN + NAD(+) + H2O + H(+). It catalyses the reaction thymine + FMNH2 + NADH + O2 = (Z)-2-methylureidoacrylate + FMN + NAD(+) + H2O + H(+). Catalyzes the pyrimidine ring opening between N-3 and C-4 by an unusual flavin hydroperoxide-catalyzed mechanism, adding oxygen atoms in the process to yield ureidoacrylate peracid, that immediately reacts with FMN forming ureidoacrylate and FMN-N(5)-oxide. The FMN-N(5)-oxide reacts spontaneously with NADH to produce FMN. Requires the flavin reductase RutF to regenerate FMN in vivo. The chain is Pyrimidine monooxygenase RutA from Escherichia coli O6:H1 (strain CFT073 / ATCC 700928 / UPEC).